Reading from the N-terminus, the 273-residue chain is Glutamate 5-kinase (273 aa).

ATP is bound at residue lysine 15. Substrate contacts are provided by serine 55, aspartate 142, and asparagine 158. ATP-binding positions include 178-179 (SD) and 220-226 (TGGMLSK).

Belongs to the glutamate 5-kinase family.

It localises to the cytoplasm. The catalysed reaction is L-glutamate + ATP = L-glutamyl 5-phosphate + ADP. Its pathway is amino-acid biosynthesis; L-proline biosynthesis; L-glutamate 5-semialdehyde from L-glutamate: step 1/2. Functionally, catalyzes the transfer of a phosphate group to glutamate to form L-glutamate 5-phosphate. In Streptococcus pyogenes serotype M6 (strain ATCC BAA-946 / MGAS10394), this protein is Glutamate 5-kinase.